We begin with the raw amino-acid sequence, 219 residues long: Rho-related protein racN (219 aa).

GTP is bound at residue 12–19; the sequence is GDVTIGKT. Positions 33 to 41 match the Effector region motif; that stretch reads YIPTIFDNH. Residues 58-62 and 114-117 each bind GTP; these read DTGGG and TKTD. A Cysteine methyl ester modification is found at Cys216. A lipid anchor (S-geranylgeranyl cysteine) is attached at Cys216. Positions 217-219 are cleaved as a propeptide — removed in mature form; sequence IIC.

The protein belongs to the small GTPase superfamily. Rho family.

It localises to the cell membrane. This Dictyostelium discoideum (Social amoeba) protein is Rho-related protein racN (racN).